The following is a 230-amino-acid chain: dITP/XTP pyrophosphatase (230 aa).

7 to 12 (STNPGK) is a substrate binding site. Residues Glu-41 and Asp-70 each coordinate Mg(2+). Asp-70 serves as the catalytic Proton acceptor. Substrate contacts are provided by residues Ser-71, 181 to 184 (FGYD), Lys-205, and 210 to 211 (HR).

The protein belongs to the HAM1 NTPase family. As to quaternary structure, homodimer. Mg(2+) serves as cofactor.

It catalyses the reaction XTP + H2O = XMP + diphosphate + H(+). It carries out the reaction dITP + H2O = dIMP + diphosphate + H(+). The enzyme catalyses ITP + H2O = IMP + diphosphate + H(+). In terms of biological role, pyrophosphatase that catalyzes the hydrolysis of nucleoside triphosphates to their monophosphate derivatives, with a high preference for the non-canonical purine nucleotides XTP (xanthosine triphosphate), dITP (deoxyinosine triphosphate) and ITP. Seems to function as a house-cleaning enzyme that removes non-canonical purine nucleotides from the nucleotide pool, thus preventing their incorporation into DNA/RNA and avoiding chromosomal lesions. This Anaeromyxobacter sp. (strain Fw109-5) protein is dITP/XTP pyrophosphatase.